Here is a 516-residue protein sequence, read N- to C-terminus: Keratin, type II cuticular Hb2 (516 aa).

The segment at 1–118 (MSCRNFQLSP…PTVQRVKRDE (118 aa)) is head. In terms of domain architecture, IF rod spans 118-429 (EKEQIKCLNN…RLLEGEEHRL (312 aa)). The coil 1A stretch occupies residues 119–153 (KEQIKCLNNRFASFINKVRFLEQKNKLLETKWNFM). The linker 1 stretch occupies residues 154-163 (QQQRSCQSNM). The coil 1B stretch occupies residues 164–264 (EPLFEGYICA…FEEEIGLLQS (101 aa)). A linker 12 region spans residues 265-281 (QISETSVIVKMDNSREL). Residues 282-425 (DVDGIVAEIK…ATYRRLLEGE (144 aa)) form a coil 2 region. Positions 426–516 (EHRLCEGIGP…VGVGSNSCSR (91 aa)) are tail.

The protein belongs to the intermediate filament family. In terms of assembly, heterotetramer of two type I and two type II keratins.

This Mus musculus (Mouse) protein is Keratin, type II cuticular Hb2 (Krt82).